A 126-amino-acid chain; its full sequence is Fluoride-specific ion channel FluC (126 aa).

The next 4 helical transmembrane spans lie at G5–V25, Y36–F56, L69–I89, and W99–I119. Residues G76 and T79 each coordinate Na(+).

It belongs to the fluoride channel Fluc/FEX (TC 1.A.43) family.

The protein resides in the cell inner membrane. It carries out the reaction fluoride(in) = fluoride(out). Its activity is regulated as follows. Na(+) is not transported, but it plays an essential structural role and its presence is essential for fluoride channel function. Fluoride-specific ion channel. Important for reducing fluoride concentration in the cell, thus reducing its toxicity. This chain is Fluoride-specific ion channel FluC, found in Cupriavidus metallidurans (strain ATCC 43123 / DSM 2839 / NBRC 102507 / CH34) (Ralstonia metallidurans).